We begin with the raw amino-acid sequence, 702 residues long: Polyribonucleotide nucleotidyltransferase 1 (702 aa).

Residues Asp483 and Asp489 each contribute to the Mg(2+) site. Residues 550–609 enclose the KH domain; the sequence is PQVTKLKVHPDKVREVIGAGGKVINKIIDETGVKINIENDGTIYIAAPDQESARVALEMI. The S1 motif domain maps to 619–687; it reads GEVYTGKVIK…PQGKIGLSRK (69 aa).

This sequence belongs to the polyribonucleotide nucleotidyltransferase family. Requires Mg(2+) as cofactor.

It is found in the cytoplasm. It carries out the reaction RNA(n+1) + phosphate = RNA(n) + a ribonucleoside 5'-diphosphate. Involved in mRNA degradation. Catalyzes the phosphorolysis of single-stranded polyribonucleotides processively in the 3'- to 5'-direction. The sequence is that of Polyribonucleotide nucleotidyltransferase 1 from Alkaliphilus metalliredigens (strain QYMF).